The following is a 206-amino-acid chain: Large ribosomal subunit protein uL4 (206 aa).

The interval 62–85 (KPWRQKGTGRARQGSTRSPQFRGG) is disordered.

The protein belongs to the universal ribosomal protein uL4 family. As to quaternary structure, part of the 50S ribosomal subunit.

One of the primary rRNA binding proteins, this protein initially binds near the 5'-end of the 23S rRNA. It is important during the early stages of 50S assembly. It makes multiple contacts with different domains of the 23S rRNA in the assembled 50S subunit and ribosome. Its function is as follows. Forms part of the polypeptide exit tunnel. The sequence is that of Large ribosomal subunit protein uL4 from Rhodospirillum centenum (strain ATCC 51521 / SW).